The following is a 346-amino-acid chain: D-alanine--D-alanine ligase (346 aa).

The ATP-grasp domain maps to 133-327; the sequence is KLYAKSVGVK…ALADQISLEK (195 aa). Residue 159–211 participates in ATP binding; sequence LSFPCIIKPARLGSSIGISIVKDEKDLEYAKDVGFEFDNDLVVEEFKNNIKEY. The Mg(2+) site is built by aspartate 284, glutamate 296, and asparagine 298.

Belongs to the D-alanine--D-alanine ligase family. The cofactor is Mg(2+). Mn(2+) serves as cofactor.

The protein localises to the cytoplasm. It catalyses the reaction 2 D-alanine + ATP = D-alanyl-D-alanine + ADP + phosphate + H(+). Its pathway is cell wall biogenesis; peptidoglycan biosynthesis. In terms of biological role, cell wall formation. The polypeptide is D-alanine--D-alanine ligase (Campylobacter jejuni subsp. jejuni serotype O:2 (strain ATCC 700819 / NCTC 11168)).